Consider the following 553-residue polypeptide: Putative transport protein YidE (553 aa).

5 helical membrane passes run 4–24 (IALTVSVLALVAVVGLWIGNI), 28–48 (GVGFGIGGVLFGGIIVGHFVD), 65–85 (FGLILFVYTIGIQVGPGFFAS), 95–115 (LFAVLIVIMGGLVTAILHKIF), and 158–178 (MSYAMAYPFGICGILLTMWLM). RCK C-terminal domains lie at 192–276 (KHES…VIGK) and 279–361 (DTSL…VVGN). 6 helical membrane passes run 371-391 (MLPVFIGIGLGVLLGSIPLFV), 393-413 (GFPVALKLGLAGGPLIMALIL), 437-457 (LGIVLFLAVVGLKSGGDFVDT), 464-484 (LSWIGYGIFITAIPLITVGLL), 493-513 (YLTLCGMLAGSMTDPPALAFA), and 533-553 (LVMFLRIITPQLLAVIFWGMG).

This sequence belongs to the AAE transporter (TC 2.A.81) family. YidE subfamily.

It is found in the cell membrane. In Salmonella heidelberg (strain SL476), this protein is Putative transport protein YidE.